The sequence spans 530 residues: MKVISGLLFFILISCSLFLVQGQVDCVTNSSDASCTNFQYPLANITADINNLCGSMPYMPVCTIQQSCNQESSTSGICDPFSILGDSCLHDMPGMSGCNNFKKLCASGSVVEQCSTVDSVTDLPTTMKMWANIKSICNEMTMTGCEKCTILNATCDVLTVYSTLCLAMPEMGQCANWTQMCASSGNMASSPISSGICTDEPTPATDCFTNPSDPSCADYVYTAANANADILNLCKSMPYMTVCSIQKSCNQESSTSGICAPFSILGDSCLHDMPGMNGCSNFKKLCASGSVVEQCSSVDSISNLPTTMQLFAGIKSICTEMAMDGCEKCSGNSPTTTCDVLPVYSSLCMAMPDMSQCANWTKMCSSSGQLYNSQITSDYCVASVADAVPIMRMYFHTGILDYILFKSWVPRTDRQFAGSWFAIFFFAIFFELEKTLRSILEKRWTPNKKDSEDNNLINSSFLSGSYPKFSYRDIIRGCLHAIELTCSYALMLVAMTFNVALFFAVIAGVLVGNILFGRYRNYTPRVTCCE.

An N-terminal signal peptide occupies residues 1 to 22; the sequence is MKVISGLLFFILISCSLFLVQG. A helical membrane pass occupies residues 491–511; it reads MLVAMTFNVALFFAVIAGVLV.

The protein belongs to the SLC31A transporter family.

It is found in the late endosome membrane. The polypeptide is Protein P80 (p80) (Dictyostelium discoideum (Social amoeba)).